The chain runs to 344 residues: Sorting nexin-16 (344 aa).

Over residues 1–10 (MATPYVPVPM) the composition is skewed to pro residues. Disordered stretches follow at residues 1–49 (MATP…DSSV) and 83–105 (SIEY…NWED). Positions 14–26 (NSASSFTNNRNQR) are enriched in polar residues. Positions 27–40 (SSSFGSVSTSSNSS) are enriched in low complexity. The segment covering 88–105 (ARPRDTEEQHPDALNWED) has biased composition (basic and acidic residues). The region spanning 105–218 (DRPSTPTILG…EFLCLDDPPG (114 aa)) is the PX domain. A 1,2-diacyl-sn-glycero-3-phospho-(1D-myo-inositol-3-phosphate)-binding residues include R144, T146, and R184. Residue S222 is modified to Phosphoserine. A coiled-coil region spans residues 223–278 (LEESRAFCETLEETNYHLQRELLEKQKEVESLKKLLGEKQLHIDALETRIRTLSLE).

It belongs to the sorting nexin family. Homooligomer. Interacts with EGFR.

It is found in the early endosome membrane. The protein resides in the late endosome membrane. Its subcellular location is the cytoplasm. It localises to the lysosome. Functionally, may be involved in several stages of intracellular trafficking. Plays a role in protein transport from early to late endosomes. Plays a role in protein transport to the lysosome. Promotes degradation of EGFR after EGF signaling. This chain is Sorting nexin-16 (Snx16), found in Rattus norvegicus (Rat).